Reading from the N-terminus, the 137-residue chain is Leaf-specific thionin (137 aa).

An N-terminal signal peptide occupies residues 1 to 28 (MATNKSIKSVVICVLILGLVLEQVQVEA). Cystine bridges form between C31-C68, C32-C60, C40-C58, and C44-C54. Residues 75–137 (LNLLPESGEP…DGEVIQSVEA (63 aa)) constitute a propeptide, acidic domain.

Belongs to the plant thionin (TC 1.C.44) family. 4 C-C subfamily.

Its subcellular location is the secreted. Its function is as follows. Thionins are small plant proteins which are toxic to animal cells. They seem to exert their toxic effect at the level of the cell membrane. Their precise function is not known. This chain is Leaf-specific thionin (THI1.5), found in Hordeum vulgare (Barley).